We begin with the raw amino-acid sequence, 557 residues long: Hydroxylamine reductase (557 aa).

[4Fe-4S] cluster-binding residues include Cys4, Cys7, Cys19, and Cys26. The hybrid [4Fe-2O-2S] cluster site is built by His253, Glu277, Cys321, Cys408, Cys436, Cys461, Glu495, and Lys497. Cys408 carries the cysteine persulfide modification.

The protein belongs to the HCP family. Requires [4Fe-4S] cluster as cofactor. Hybrid [4Fe-2O-2S] cluster is required as a cofactor.

The protein resides in the cytoplasm. It catalyses the reaction A + NH4(+) + H2O = hydroxylamine + AH2 + H(+). Its function is as follows. Catalyzes the reduction of hydroxylamine to form NH(3) and H(2)O. In Acidithiobacillus ferrooxidans (strain ATCC 53993 / BNL-5-31) (Leptospirillum ferrooxidans (ATCC 53993)), this protein is Hydroxylamine reductase.